Reading from the N-terminus, the 310-residue chain is MDEHGVQTPQVTSLIVVAGLSGAGKSTALKSLEDIGYLWIDNPPLLALPGLMRELSESTEDSHVAVGLHMREHGRDPDAWQRLQPILQEMTARLELLYLEADSDILVKRFRETRRRHPLAGRNMAGGGGEALRTVKEAVEEERLRMQPVRAQANLVIDTTYLRPQMLQERVADLFRMDAHNTQGITLFVRSLGFKYGSNTDADMVLDARFLQNPYYDLALRELTGMDAPVRAFLDRDGEAEQFLTHLQGLFGYLIPRYIKERKCYFTVDIGCTGGQHRSVYLVDRLGEMLGQMGYRVVVRHRDMHRKSAK.

19–26 (GLSGAGKS) serves as a coordination point for ATP.

It belongs to the RapZ-like family.

Functionally, displays ATPase and GTPase activities. The protein is Nucleotide-binding protein Mmc1_3333 of Magnetococcus marinus (strain ATCC BAA-1437 / JCM 17883 / MC-1).